The primary structure comprises 872 residues: Alanine--tRNA ligase (872 aa).

Zn(2+) contacts are provided by H563, H567, C665, and H669.

Belongs to the class-II aminoacyl-tRNA synthetase family. Zn(2+) is required as a cofactor.

The protein localises to the cytoplasm. It carries out the reaction tRNA(Ala) + L-alanine + ATP = L-alanyl-tRNA(Ala) + AMP + diphosphate. Functionally, catalyzes the attachment of alanine to tRNA(Ala) in a two-step reaction: alanine is first activated by ATP to form Ala-AMP and then transferred to the acceptor end of tRNA(Ala). Also edits incorrectly charged Ser-tRNA(Ala) and Gly-tRNA(Ala) via its editing domain. This is Alanine--tRNA ligase from Bacteroides thetaiotaomicron (strain ATCC 29148 / DSM 2079 / JCM 5827 / CCUG 10774 / NCTC 10582 / VPI-5482 / E50).